Here is a 279-residue protein sequence, read N- to C-terminus: Putative pyruvate, phosphate dikinase regulatory protein (279 aa).

Position 157-164 (157-164 (GVSRTSKT)) interacts with ADP.

This sequence belongs to the pyruvate, phosphate/water dikinase regulatory protein family. PDRP subfamily.

The enzyme catalyses N(tele)-phospho-L-histidyl/L-threonyl-[pyruvate, phosphate dikinase] + ADP = N(tele)-phospho-L-histidyl/O-phospho-L-threonyl-[pyruvate, phosphate dikinase] + AMP + H(+). The catalysed reaction is N(tele)-phospho-L-histidyl/O-phospho-L-threonyl-[pyruvate, phosphate dikinase] + phosphate + H(+) = N(tele)-phospho-L-histidyl/L-threonyl-[pyruvate, phosphate dikinase] + diphosphate. Functionally, bifunctional serine/threonine kinase and phosphorylase involved in the regulation of the pyruvate, phosphate dikinase (PPDK) by catalyzing its phosphorylation/dephosphorylation. The sequence is that of Putative pyruvate, phosphate dikinase regulatory protein from Lactobacillus helveticus (strain DPC 4571).